Reading from the N-terminus, the 303-residue chain is tRNA dimethylallyltransferase 1 (303 aa).

ATP is bound at residue 17–24; the sequence is GPTACGKT. 19–24 contributes to the substrate binding site; the sequence is TACGKT. An interaction with substrate tRNA region spans residues 42-45; sequence DSRQ.

It belongs to the IPP transferase family. Monomer. It depends on Mg(2+) as a cofactor.

It carries out the reaction adenosine(37) in tRNA + dimethylallyl diphosphate = N(6)-dimethylallyladenosine(37) in tRNA + diphosphate. Functionally, catalyzes the transfer of a dimethylallyl group onto the adenine at position 37 in tRNAs that read codons beginning with uridine, leading to the formation of N6-(dimethylallyl)adenosine (i(6)A). The sequence is that of tRNA dimethylallyltransferase 1 from Hahella chejuensis (strain KCTC 2396).